Here is a 263-residue protein sequence, read N- to C-terminus: uncharacterized protein (263 aa).

The stretch at 72-168 forms a coiled coil; it reads LDKKETKELS…RTIVEIRNTK (97 aa). The tract at residues 76-158 is disordered; the sequence is ETKELSKKEK…EKKEKKEKED (83 aa). The segment covering 83–95 has biased composition (basic residues); that stretch reads KEKKQLKKEKKAL. A compositionally biased stretch (basic and acidic residues) spans 96-107; it reads KKENKGGKDKKD. The span at 108–121 shows a compositional bias: basic residues; sequence KKDKKDKKDKKDKK. 2 stretches are compositionally biased toward basic and acidic residues: residues 122-131 and 139-158; these read DKKDKGDKKD and KHDD…EKED.

This is an uncharacterized protein from Dictyostelium discoideum (Social amoeba).